The chain runs to 213 residues: Putative tRNA methyltransferase MPN_351 (213 aa).

The protein belongs to the TrmK family.

It is found in the cytoplasm. The sequence is that of Putative tRNA methyltransferase MPN_351 from Mycoplasma pneumoniae (strain ATCC 29342 / M129 / Subtype 1) (Mycoplasmoides pneumoniae).